The primary structure comprises 400 residues: Cytohesin-2 (400 aa).

Positions 10 to 63 form a coiled coil; the sequence is DLTPEERMELENIRRRKQELLVEIQRLREELSEAMSEVEGLEANEGSKTLQRNR. The region spanning 72–201 is the SEC7 domain; that stretch reads FNMDPKKGIQ…VIMLNTSLHN (130 aa). Positions 259–376 constitute a PH domain; that stretch reads NPDREGWLLK…WIKSIQAAVS (118 aa). A 1,2-diacyl-sn-glycero-3-phospho-(1D-myo-inositol-3,4,5-trisphosphate) contacts are provided by residues 268–276, Arg280, Tyr291, Arg301, Lys339, Asn350, and His351; that span reads KLGGGRVKT. The segment at 387 to 395 is C-terminal autoinhibitory region; sequence RKKRISVKK.

Heteromer. Composed of TAMALIN, CYTH2 and at least one GRM1. Interacts with ARRB1. Interacts with ARL4D; the interaction is direct. Directly interacts with CCDC120 through the coiled coil domain; this interaction stabilizes CCDC120, possibly by preventing its ubiquitination, and is required for neurite growth in neuroblastoma cells. Interacts with ARF1. Interacts with FRMD4A. Interacts (via N-terminal domain) with INAVA (via N-terminal domain). As to expression, widely expressed.

The protein resides in the cell membrane. The protein localises to the cytoplasm. It is found in the cell projection. Its subcellular location is the growth cone. It localises to the cell junction. The protein resides in the tight junction. The protein localises to the adherens junction. Its function is as follows. Acts as a guanine-nucleotide exchange factor (GEF). Promotes guanine-nucleotide exchange on ARF1, ARF3 and ARF6. Activates ARF factors through replacement of GDP with GTP. The cell membrane form, in association with ARL4 proteins, recruits ARF6 to the plasma membrane. Involved in neurite growth. The protein is Cytohesin-2 of Homo sapiens (Human).